The primary structure comprises 87 residues: Cell division topological specificity factor (87 aa).

The protein belongs to the MinE family.

Functionally, prevents the cell division inhibition by proteins MinC and MinD at internal division sites while permitting inhibition at polar sites. This ensures cell division at the proper site by restricting the formation of a division septum at the midpoint of the long axis of the cell. The protein is Cell division topological specificity factor of Rhizobium meliloti (strain 1021) (Ensifer meliloti).